A 233-amino-acid chain; its full sequence is Orotidine 5'-phosphate decarboxylase (233 aa).

Substrate contacts are provided by residues Asp-11, Lys-33, 60 to 69, Thr-120, Arg-181, Gln-190, Gly-210, and Arg-211; that span reads DLKFHDIPNT. Catalysis depends on Lys-62, which acts as the Proton donor.

The protein belongs to the OMP decarboxylase family. Type 1 subfamily. As to quaternary structure, homodimer.

It catalyses the reaction orotidine 5'-phosphate + H(+) = UMP + CO2. Its pathway is pyrimidine metabolism; UMP biosynthesis via de novo pathway; UMP from orotate: step 2/2. Catalyzes the decarboxylation of orotidine 5'-monophosphate (OMP) to uridine 5'-monophosphate (UMP). The sequence is that of Orotidine 5'-phosphate decarboxylase from Vibrio campbellii (strain ATCC BAA-1116).